The sequence spans 346 residues: Phosphoribosylformylglycinamidine cyclo-ligase (346 aa).

This sequence belongs to the AIR synthase family.

It is found in the cytoplasm. It carries out the reaction 2-formamido-N(1)-(5-O-phospho-beta-D-ribosyl)acetamidine + ATP = 5-amino-1-(5-phospho-beta-D-ribosyl)imidazole + ADP + phosphate + H(+). It functions in the pathway purine metabolism; IMP biosynthesis via de novo pathway; 5-amino-1-(5-phospho-D-ribosyl)imidazole from N(2)-formyl-N(1)-(5-phospho-D-ribosyl)glycinamide: step 2/2. The protein is Phosphoribosylformylglycinamidine cyclo-ligase of Bacillus cereus (strain ZK / E33L).